Here is a 56-residue protein sequence, read N- to C-terminus: Large ribosomal subunit protein bL33 (56 aa).

This sequence belongs to the bacterial ribosomal protein bL33 family.

This Actinobacillus succinogenes (strain ATCC 55618 / DSM 22257 / CCUG 43843 / 130Z) protein is Large ribosomal subunit protein bL33.